A 3589-amino-acid chain; its full sequence is MGSTTVEPVGSTYARPKPLGNLDHRIEQLLGSESVLNESPGHSPNAYGIPYTARNLTLEDVDHCKSLTNKDLSLEFWKSHLQTAKPCILTRLKPGTGSSILSSRQSVKVDLGGVNTTCRNLFDSTGISLMTVFKVAWGMVLSTYTGSDHVCFGYGAARPSMSVDGEQTTIKPLIKMLPCDMLFKGGTTLLGTVHKAESDFICTIPYQSVSIAEIHHGIGTESGALFNTSIIFWPQEDFSDNPITEVLSQKVTETESLTECDIIMHVDSKQQCYLSYWDYFLSDEQANHLAGALNVAMKSIFESPHRPVGQVEMFSYLDQQKLLQWNGQAPIASESCLGDLIGQNCHSRPDSLAVDSWDGFFTYQELDRLSSTLANKLRCAGVGPDVFVTACFDRCKWMPVAMLGIIKAGGAICALDPSYPLGRLTGMCQLLKSTVVLTTANNAQQAEQLALTTIVLGNDLWTGDSYDEQERQAPLSNVCPSNALYAVFTSGSTGKPKGVVVEHRSFSSCALASLKPLDIRPHDRVLHISSYAFDISIFETLATLTAGASVAIPSEKARREDLPGAMRELQATWAFLTPTVARMYQPKDFPSLRTLCLGGEAIHTSDIGLWASKNLVTGYNPAESCPLGISGPADKSAASFLGWSFSSQASWIVDPRDYQKLAPIGAVGELMIEGPAVARGYIHDLTCSHPDSPFVLPPPQWLSRFRASTSQDTRLYRTGDLVQYGSNGSVHFIGRKDLQVKVHGQRVELSEIEFQLHKTLLPLDCKVVVDAVTFTGHTSVIAFITAAEHSDLENEDDAVRSPDVKVITQDFEIRAADAATKLQSILPRHMVPTIYLPVGHIPMSRSGKIDRQKLRSLALSLPRETLYHIGRQPGPGEIVVTDVERRLQLLFAQVLDLSPEKIKADSDFFRLGGDSIYAMKLLALAPQQGPRDLTYEEIFRHPKLRDLAAASSSFSNISLAIPEDLGPAPFSLARDADSLTKIASEQCGVAVGDIEDIYPCTSLQESLIASTAHDQDAYVGVQSFTLNDDIDTTRLKMAWKMTSEGHPILRTRIIQTDSGAPYQAVIRGPLSWSEESSSDDLPPQFQPSIGLGTPLVQLCLTNSRLLVAMHHALYDGWSLPLLLAEVDQAYRQLSVRQLPPFNRYVKHVTETVDSAASFWKAELQDADPVDFPPLPHLNYKPEPRALLTKSITLTAHTNSQHNVTLATELQLAWALTSHTYTNSQDVVFGIISSGRGAPVAGIERMLGPTFASTPLRVPLDPAQDVREALEELQYRLAEQTKYVQIGLQRIRQQGPNAAAACSFQTMLVVEPNQPVKTQSAWFSRHEFLSELTRFSSHSLTLRCKLLAGSVEVTAIYDQLVVPDAQMQRILSQFQHILTQIQGIGSRDTTIGDIDRLSSGDWNELQAWNSTLPPGLELSVHQMVQAKAQMQPEALAIHSWDGDLTYKELEDYAKGLANRLHALGVRPNTFVAIYLQKSLWVVVAQLAVLIAGAAFTTLETSQPINRLRDVCRTVQPTVVLTSDKLRLSGADLEVPAPLLVINQQLLLEEPGSHSRPLENHTIMASDAMYSIATSGTTGKPKVVVIEHQAFLANSKHLIDRWGFTADSRVLQFAGYSFDAMIVEHFITLLAGGCICIPSSFDRDNRLATCIVEMRVNWAMLTSSVIPLFTPAAVPTLQTLVQAGEPMHQGITDCWASHVQLFNAYGPTECSVISTTSNIINPDARNPRNIGFTTGGVCWIVDPENPESPPVPIGAEGELIIEGAILARGYLGDRVRTAAAFTLRPGWLDDFRGSSGDNRIYRTGDIVRYDPDGSISYVRRKDSQVKLRGQRVELLDVEHHLQNCFPGALQVVADIVTVPNTQSSALVALVLATPTSSSSVAIESCSNDDQATTAHGLLLLANNPQFLIDASAAELALQDRVPSYMVPSLFIPTSRFPRDVSGKVNRGEITRSLAALSRQEWDGYVSTNRVAPTSGLERELQKIWARILNIPPDTIGVHDSFFRLGGDSITCMQVAAQCSRTGILITVKDIFKRRTIEKLAAAAVVVQCPESSTTERVNTAEAKFSFYGPGQLEEYMIQIQPQLGEGQVVEDIYPCSPIQRGILMSHARNSGNYEEVIQWKVISRAPVDVCRLRDAWAQVVDRHAVLRTLFLHVCKENYLDQVVLRSHSPMVLVYNEGEEPVNPVSTGCSQPMHHLRVKRSSAGGITVRLHINHALVDGASLFIIRRDLAMAYEGRLASSRASSPYRDYIAYLQNCHSQIQSNEYWQSYMEGTAPCLFPTLKNAGAQDSQQPFEAFTLQLGATADLNQFCENHRLALTSVLHVVWAMVVQRYTAMDEVCFGYMTSGRHVPVAGVQDIVGPLFNMLVARVGLPHDATLLSVMQKYHDNFLISLDHQHQSLAETLHSIGSASGELFNTLVSIFNDQREGEPAHKSSAVTLVGDDIHSRSEYAITLNVLMLADQVHIQLSYHTSWLSDNYARMIAETFRHVLATVLGQPQLRLNEIEMLDEEHRSGLYGRNHAAVPSFDSCIHYTIHQRCLESPESPAICAWDGDFSYRRLDQLSSSLAEELIGHGVGVEMTIPVLLEKTCWTPVAMLAVLKSGASFVLMDASHPLGRLQTICEAINPPVILASPQTRSKAVGLTSHVIEVTNRLLEQEQAEQQQTWPRVVTKGSNAAYVVFTSGSTGKPKGAIVDHSCLATAAGHLPSRMYINSASRVLQFSSHAWDIPVTDVLLTLRVGGCVCIPSDEERIGNLAQVANRMMVNWALLTPTVARLVKPEDFTHLQTLVLAGEAVSSTDLTTWHDKVRLIQGYGPAECSLVSTVSEPLTPSDNPRNIGQPNGCVAWVVHRDNHHLLAPSGAIEELVLEGPIVSRGYINDPERSAAVFVDPPTWLTRLRGGHSPTRLYKTGDLVSAGLDGCLSFVGRKDDQVKIRGQRVELGEVEALASQAFPGSHVVVETVKDLSSTILVAFILQKETAHAQPSSISSLLHPPSPLFRELISAASCSLRETMPSFMIPTVFLPLAHLPKAPTGKTDRKFLRGHVASLSRMELEAYSIVDATGRAPSTPLETRLQELVGRVLHRSPESIPLDEDLFTFGLDSLTAMTLATLVREDGLAISVPTIFQRPRLSELAVVLNQEQQIKQGQFLAPPPNALMASMDELCAQWQLDRSQVVNIAPTTYYQRGSLASHHTNFIALHFSQPLDPIPFRNAVVGLVQKHAILRTAFVPFRETFVQLILRDFDLPVQEIRTDEDDPSVVAESFCREADRVPVSFGTPITQLYMILGRAGDRLSAVLRLQRAQYDGVAVSCMIADLRSAFDEAPSSALPTLEYADYVISRRAHSSPPVFQVWRELLQGSSMTYLVPPTEYIRSTDRSRTELLVTSSCDIPMPDTKGGITMATVIKTAWALCLARQTQSKDVVFAQLVRNRHLAIAGIDRTVGPCINYVPVRASLNLDWTAKEFLHWVQRQHIRTMTCDMADWDDLVIESTSWPRDTELGSAVHYLSAPVASDYTFAGDVPCQFQMYDFKMVHTYPMVTCLPFPSVGDSSLTVLKIILTSAVFGQGVADRLLSLFRDMVHRLTTYPESLVSELLIIR.

Positions 344 to 742 are adenylation (A) domain 1; the sequence is NCHSRPDSLA…IGRKDLQVKV (399 aa). One can recognise a Carrier 1 domain in the interval 883–952; sequence VERRLQLLFA…KLRDLAAASS (70 aa). S915 bears the O-(pantetheine 4'-phosphoryl)serine mark. A condensation (C) domain 1 region spans residues 995–1380; it reads EDIYPCTSLQ…SQFQHILTQI (386 aa). The tract at residues 1424-1826 is adenylation (A) domain 2; the sequence is QAKAQMQPEA…RRKDSQVKLR (403 aa). The 69-residue stretch at 1974-2042 folds into the Carrier 2 domain; it reads LERELQKIWA…TIEKLAAAAV (69 aa). S2006 bears the O-(pantetheine 4'-phosphoryl)serine mark. Residues 2087-2509 form a condensation (C) domain 2 region; sequence VEDIYPCSPI…IEMLDEEHRS (423 aa). The segment at 2534–2929 is adenylation (A) domain 3; the sequence is CLESPESPAI…GRKDDQVKIR (396 aa). Residues 3064–3132 form the Carrier 3 domain; it reads LETRLQELVG…RLSELAVVLN (69 aa). Residue S3096 is modified to O-(pantetheine 4'-phosphoryl)serine. The segment at 3187 to 3585 is cyclization (Cyc) domain; it reads TNFIALHFSQ…TYPESLVSEL (399 aa).

It belongs to the NRP synthetase family.

It functions in the pathway alkaloid biosynthesis; ergot alkaloid biosynthesis. In terms of biological role, D-lysergyl-peptide-synthetase subunit 1; part of the gene cluster that mediates the biosynthesis of fungal ergot alkaloid ergovaline, the predominant ergopeptine product in E.festucae var. lolii. DmaW catalyzes the first step of ergot alkaloid biosynthesis by condensing dimethylallyl diphosphate (DMAP) and tryptophan to form 4-dimethylallyl-L-tryptophan. The second step is catalyzed by the methyltransferase easF that methylates 4-dimethylallyl-L-tryptophan in the presence of S-adenosyl-L-methionine, resulting in the formation of 4-dimethylallyl-L-abrine. The catalase easC and the FAD-dependent oxidoreductase easE then transform 4-dimethylallyl-L-abrine to chanoclavine-I which is further oxidized by easD in the presence of NAD(+), resulting in the formation of chanoclavine-I aldehyde. Agroclavine dehydrogenase easG then mediates the conversion of chanoclavine-I aldehyde to agroclavine via a non-enzymatic adduct reaction: the substrate is an iminium intermediate that is formed spontaneously from chanoclavine-I aldehyde in the presence of glutathione. The presence of easA is not required to complete this reaction. Further conversion of agroclavine to paspalic acid is a two-step process involving oxidation of agroclavine to elymoclavine and of elymoclavine to paspalic acid, the second step being performed by the elymoclavine oxidase cloA. Paspalic acid is then further converted to D-lysergic acid. Ergovaline is assembled from D-lysergic acid and three different amino acids by the D-lysergyl-peptide-synthetase composed of a monomudular (lpsB) and a trimodular (lpsA) nonribosomal peptide synthetase subunit. This Epichloe festucae var. lolii (Neotyphodium lolii) protein is D-lysergyl-peptide-synthetase subunit 1.